The following is a 599-amino-acid chain: Elongation factor 4 (599 aa).

Residues 5–187 enclose the tr-type G domain; the sequence is KNIRNFSIIA…QLVERIPAPE (183 aa). GTP-binding positions include 17–22 and 134–137; these read DHGKST and NKID.

The protein belongs to the TRAFAC class translation factor GTPase superfamily. Classic translation factor GTPase family. LepA subfamily.

The protein resides in the cell inner membrane. It carries out the reaction GTP + H2O = GDP + phosphate + H(+). Its function is as follows. Required for accurate and efficient protein synthesis under certain stress conditions. May act as a fidelity factor of the translation reaction, by catalyzing a one-codon backward translocation of tRNAs on improperly translocated ribosomes. Back-translocation proceeds from a post-translocation (POST) complex to a pre-translocation (PRE) complex, thus giving elongation factor G a second chance to translocate the tRNAs correctly. Binds to ribosomes in a GTP-dependent manner. The polypeptide is Elongation factor 4 (Alcanivorax borkumensis (strain ATCC 700651 / DSM 11573 / NCIMB 13689 / SK2)).